A 727-amino-acid polypeptide reads, in one-letter code: Probable glutamate carboxypeptidase ARB_02390 (727 aa).

A signal peptide spans 1-18; the sequence is MIVKSLSLLALAAATVEG. N-linked (GlcNAc...) asparagine glycans are attached at residues asparagine 60 and asparagine 80. Residues 158–296 form the PA domain; that stretch reads ATAEYVYVGR…ISQLDAQPIL (139 aa). Arginine 197 serves as a coordination point for substrate. An N-linked (GlcNAc...) asparagine glycan is attached at asparagine 223. A disordered region spans residues 255-279; that stretch reads FPGDPTTPGYPSRPDSPRKDKSPVV. Ca(2+) contacts are provided by threonine 261 and tyrosine 264. The segment at 266–565 is NAALADase; the sequence is SRPDSPRKDK…QFLGLLGYHL (300 aa). N-linked (GlcNAc...) asparagine glycosylation is found at asparagine 310, asparagine 319, and asparagine 353. Histidine 366 contacts Zn(2+). Glutamate 414 acts as the For NAALADase activity in catalysis. Glutamate 415 provides a ligand contact to Zn(2+). The Ca(2+) site is built by glutamate 423 and glutamate 426. Aspartate 443 contacts Zn(2+). Substrate-binding positions include 516 to 518 and tyrosine 530; that span reads TGA. Histidine 531 serves as a coordination point for Zn(2+). Catalysis depends on serine 604, which acts as the Charge relay system. N-linked (GlcNAc...) asparagine glycosylation is present at asparagine 614. Histidine 665 (charge relay system) is an active-site residue. Position 675–676 (675–676) interacts with substrate; that stretch reads GY. Asparagine 692 carries N-linked (GlcNAc...) asparagine glycosylation.

The protein belongs to the peptidase M28 family. M28B subfamily. It depends on Zn(2+) as a cofactor.

The protein resides in the secreted. The catalysed reaction is Release of an unsubstituted, C-terminal glutamyl residue, typically from Ac-Asp-Glu or folylpoly-gamma-glutamates.. Functionally, has both folate hydrolase and N-acetylated-alpha-linked-acidic dipeptidase (NAALADase) activity. Also exhibits a dipeptidyl-peptidase IV type activity. The polypeptide is Probable glutamate carboxypeptidase ARB_02390 (Arthroderma benhamiae (strain ATCC MYA-4681 / CBS 112371) (Trichophyton mentagrophytes)).